We begin with the raw amino-acid sequence, 89 residues long: DNA/RNA-binding protein Alba 2 (89 aa).

It belongs to the histone-like Alba family. In terms of assembly, forms homodimers and homotetramers. Interacts with Alba 1.

It is found in the cytoplasm. The protein resides in the chromosome. Its function is as follows. Binds double-stranded DNA tightly but without sequence specificity. Involved in DNA compaction. The polypeptide is DNA/RNA-binding protein Alba 2 (Archaeoglobus fulgidus (strain ATCC 49558 / DSM 4304 / JCM 9628 / NBRC 100126 / VC-16)).